The chain runs to 364 residues: Isoflavone 4'-O-methyltransferase (364 aa).

Residues 206–209 (VGGG), Asp-230, 230–231 (DQ), 250–251 (DM), and Lys-264 each bind S-adenosyl-L-methionine. Catalysis depends on His-268, which acts as the Proton acceptor.

This sequence belongs to the class I-like SAM-binding methyltransferase superfamily. Cation-independent O-methyltransferase family. COMT subfamily. Homodimer.

It catalyses the reaction a 4'-hydroxyisoflavone + S-adenosyl-L-methionine = a 4'-methoxyisoflavone + S-adenosyl-L-homocysteine + H(+). The enzyme catalyses (2R,3S)-2,4',7-trihydroxyisoflavanone + S-adenosyl-L-methionine = (2R,3S)-2,7-dihydroxy-4'-methoxyisoflavanone + S-adenosyl-L-homocysteine + H(+). Its function is as follows. 2-hydroxyisoflavanone 4'-O-methyltransferase involved in the biosynthesis of the phytoalexin medicarpin. Has also an in vitro (+)-6a-hydroxymaackiain-3-0-methyltransferase activity, converting the pterocarpan 6a-hydroxymaackiain into pisatin. No activity with di- or trihydroxylated isoflavones, including daidzein and genistein, or with (-)-medicarpin and maackiain. The dual activity for either 3- or 4'-O-methylation depends upon substrate availability. The protein is Isoflavone 4'-O-methyltransferase (HI4'OMT) of Medicago truncatula (Barrel medic).